The primary structure comprises 163 residues: ATP synthase subunit b (163 aa).

A helical membrane pass occupies residues 1-21 (MISFNLTSIVNLVGFLAFMFL).

This sequence belongs to the ATPase B chain family. In terms of assembly, F-type ATPases have 2 components, F(1) - the catalytic core - and F(0) - the membrane proton channel. F(1) has five subunits: alpha(3), beta(3), gamma(1), delta(1), epsilon(1). F(0) has three main subunits: a(1), b(2) and c(10-14). The alpha and beta chains form an alternating ring which encloses part of the gamma chain. F(1) is attached to F(0) by a central stalk formed by the gamma and epsilon chains, while a peripheral stalk is formed by the delta and b chains.

The protein localises to the cell inner membrane. In terms of biological role, f(1)F(0) ATP synthase produces ATP from ADP in the presence of a proton or sodium gradient. F-type ATPases consist of two structural domains, F(1) containing the extramembraneous catalytic core and F(0) containing the membrane proton channel, linked together by a central stalk and a peripheral stalk. During catalysis, ATP synthesis in the catalytic domain of F(1) is coupled via a rotary mechanism of the central stalk subunits to proton translocation. Its function is as follows. Component of the F(0) channel, it forms part of the peripheral stalk, linking F(1) to F(0). The sequence is that of ATP synthase subunit b from Petrotoga mobilis (strain DSM 10674 / SJ95).